The following is a 430-amino-acid chain: Glucose-6-phosphate isomerase (430 aa).

Residue Glu284 is the Proton donor of the active site. Active-site residues include His305 and Lys420.

Belongs to the GPI family.

The protein localises to the cytoplasm. The catalysed reaction is alpha-D-glucose 6-phosphate = beta-D-fructose 6-phosphate. It functions in the pathway carbohydrate biosynthesis; gluconeogenesis. Its pathway is carbohydrate degradation; glycolysis; D-glyceraldehyde 3-phosphate and glycerone phosphate from D-glucose: step 2/4. Functionally, catalyzes the reversible isomerization of glucose-6-phosphate to fructose-6-phosphate. This is Glucose-6-phosphate isomerase from Mycoplasmopsis synoviae (strain 53) (Mycoplasma synoviae).